The following is a 230-amino-acid chain: Large ribosomal subunit protein uL1 (230 aa).

Belongs to the universal ribosomal protein uL1 family. As to quaternary structure, part of the 50S ribosomal subunit.

Functionally, binds directly to 23S rRNA. The L1 stalk is quite mobile in the ribosome, and is involved in E site tRNA release. In terms of biological role, protein L1 is also a translational repressor protein, it controls the translation of the L11 operon by binding to its mRNA. The protein is Large ribosomal subunit protein uL1 of Rubrobacter xylanophilus (strain DSM 9941 / JCM 11954 / NBRC 16129 / PRD-1).